The chain runs to 371 residues: Leu/Ile/Val-binding protein homolog 1 (371 aa).

Positions Met1–Ala23 are cleaved as a signal peptide.

The protein belongs to the leucine-binding protein family.

Functionally, component of an amino-acid transport system. This Brucella melitensis biotype 1 (strain ATCC 23456 / CCUG 17765 / NCTC 10094 / 16M) protein is Leu/Ile/Val-binding protein homolog 1.